Here is a 1960-residue protein sequence, read N- to C-terminus: Myosin-9 (1960 aa).

Position 2 is an N-acetylalanine (Ala-2). A mediates interaction with LIMCH1 region spans residues Ala-2–Leu-838. Residue Lys-8 is modified to N6-acetyllysine. The residue at position 11 (Tyr-11) is a Phosphotyrosine. A Myosin N-terminal SH3-like domain is found at Ala-27–Pro-77. The 696-residue stretch at Ser-81 to Asp-776 folds into the Myosin motor domain. At Lys-102 the chain carries N6-acetyllysine. Position 174–181 (Gly-174–Thr-181) interacts with ATP. An N6-acetyllysine mark is found at Lys-299, Lys-435, and Lys-613. A Phosphoserine modification is found at Ser-628. Positions Leu-654 to His-676 are actin-binding. Residue Tyr-754 is modified to Phosphotyrosine. Residues Ile-779–Ala-808 enclose the IQ domain. A coiled-coil region spans residues Leu-837–Leu-1926. N6-succinyllysine is present on Lys-850. Residues Lys-860, Lys-975, and Lys-1024 each carry the N6-acetyllysine modification. Over residues Arg-1035 to Gly-1055 the composition is skewed to basic and acidic residues. The segment at Arg-1035–Ser-1057 is disordered. Ser-1114 is modified (phosphoserine). Residues Glu-1118 to Leu-1137 are disordered. The segment covering Ser-1122–Leu-1137 has biased composition (basic and acidic residues). N6-acetyllysine is present on residues Lys-1234, Lys-1249, Lys-1357, Lys-1392, Lys-1404, Lys-1410, Lys-1459, and Lys-1638. An N6-succinyllysine modification is found at Lys-1669. Ser-1714 carries the post-translational modification Phosphoserine. An N6-acetyllysine mark is found at Lys-1793, Lys-1802, and Lys-1845. Positions Arg-1877 to Glu-1960 are disordered. An Omega-N-methylarginine modification is found at Arg-1923. Position 1943 is a phosphoserine (Ser-1943). Over residues Asp-1948–Glu-1960 the composition is skewed to basic and acidic residues.

This sequence belongs to the TRAFAC class myosin-kinesin ATPase superfamily. Myosin family. In terms of assembly, myosin is a hexameric protein that consists of 2 heavy chain subunits (MHC), 2 alkali light chain subunits (MLC) and 2 regulatory light chain subunits (MLC-2). Interacts with RASIP1. Interacts with DDR1. Interacts with PDLIM2. Interacts with SVIL. Interacts with HTRA3. Interacts with Myo7a. Interacts with CFAP95. Interacts with LIMCH1; independently of the integration of MYH9 into the myosin complex. Interacts with RAB3A. Interacts with ZBED4. Interacts with S100A4; this interaction increases cell motility. As to quaternary structure, (Microbial infection) Interacts with herpes simplex virus 1/HHV-1 envelope glycoprotein B. ISGylated. In terms of processing, ubiquitination. As to expression, in the kidney, expressed in the glomeruli. Also expressed in leukocytes.

It is found in the cytoplasm. The protein resides in the cytoskeleton. It localises to the cell cortex. Its subcellular location is the cytoplasmic vesicle. The protein localises to the secretory vesicle. It is found in the cortical granule. The protein resides in the cell membrane. Its function is as follows. Cellular myosin that appears to play a role in cytokinesis, cell shape, and specialized functions such as secretion and capping. Required for cortical actin clearance prior to oocyte exocytosis. Promotes cell motility in conjunction with S100A4. During cell spreading, plays an important role in cytoskeleton reorganization, focal contact formation (in the margins but not the central part of spreading cells), and lamellipodial retraction; this function is mechanically antagonized by MYH10. In terms of biological role, (Microbial infection) Acts as a receptor for herpes simplex virus 1/HHV-1 envelope glycoprotein B. This Homo sapiens (Human) protein is Myosin-9 (MYH9).